The following is a 404-amino-acid chain: Phosphoglycerate kinase (404 aa).

Substrate is bound by residues Asp-21–Asn-23, Arg-38, His-61–Arg-64, Arg-126, and Arg-159. ATP-binding positions include Lys-210, Glu-333, and Gly-360–Ser-363.

Belongs to the phosphoglycerate kinase family. In terms of assembly, monomer.

The protein resides in the cytoplasm. The catalysed reaction is (2R)-3-phosphoglycerate + ATP = (2R)-3-phospho-glyceroyl phosphate + ADP. Its pathway is carbohydrate degradation; glycolysis; pyruvate from D-glyceraldehyde 3-phosphate: step 2/5. The sequence is that of Phosphoglycerate kinase from Acidobacterium capsulatum (strain ATCC 51196 / DSM 11244 / BCRC 80197 / JCM 7670 / NBRC 15755 / NCIMB 13165 / 161).